A 190-amino-acid polypeptide reads, in one-letter code: MLVLLNKPYGVLSQFSDRSQPPKRTLAEFGLPPDVYAAGRLDHDSEGLLVLTDDGALAHRLTDPRHKQPKTYWVQVEGAPQAEHLQALRDGVALNDGPTRPAQVRMLDPAPQLWPRDPPVRVRKTVPDAWLELQITEGRNRQVRRMTAAVGLPTLRLVRVAIGDWRLDALAPGQWRAEATTNARPSRSRR.

The Nucleophile role is filled by Asp42.

Belongs to the pseudouridine synthase RsuA family.

The enzyme catalyses uridine(2457) in 23S rRNA = pseudouridine(2457) in 23S rRNA. Its function is as follows. Responsible for synthesis of pseudouridine from uracil-2457 in 23S ribosomal RNA. In Xanthomonas axonopodis pv. citri (strain 306), this protein is Ribosomal large subunit pseudouridine synthase E (rluE).